The sequence spans 475 residues: Ribulose bisphosphate carboxylase large chain (475 aa).

Residues 1–2 (MS) constitute a propeptide that is removed on maturation. At Pro3 the chain carries N-acetylproline. Lys14 carries the N6,N6,N6-trimethyllysine modification. Asn123 and Thr173 together coordinate substrate. Catalysis depends on Lys175, which acts as the Proton acceptor. Substrate is bound at residue Lys177. Mg(2+) is bound by residues Lys201, Asp203, and Glu204. An N6-carboxylysine modification is found at Lys201. Residue His294 is the Proton acceptor of the active site. The substrate site is built by Arg295, His327, and Ser379.

It belongs to the RuBisCO large chain family. Type I subfamily. Heterohexadecamer of 8 large chains and 8 small chains; disulfide-linked. The disulfide link is formed within the large subunit homodimers. It depends on Mg(2+) as a cofactor. The disulfide bond which can form in the large chain dimeric partners within the hexadecamer appears to be associated with oxidative stress and protein turnover.

It is found in the plastid. The protein localises to the chloroplast. The enzyme catalyses 2 (2R)-3-phosphoglycerate + 2 H(+) = D-ribulose 1,5-bisphosphate + CO2 + H2O. The catalysed reaction is D-ribulose 1,5-bisphosphate + O2 = 2-phosphoglycolate + (2R)-3-phosphoglycerate + 2 H(+). In terms of biological role, ruBisCO catalyzes two reactions: the carboxylation of D-ribulose 1,5-bisphosphate, the primary event in carbon dioxide fixation, as well as the oxidative fragmentation of the pentose substrate in the photorespiration process. Both reactions occur simultaneously and in competition at the same active site. The polypeptide is Ribulose bisphosphate carboxylase large chain (Zygnema circumcarinatum (Green alga)).